The chain runs to 234 residues: MKILFCFVLLAIAALRASVINRHNKRFAGFSVAGIGGTAGCVVVDNKLFANSFYLRDLTTEEQRELAQYVEDSNQYKEEVKTSLEERRKGWQLARHGEKDAKVLSSLAEKKFPKPPKKPSFCSAGDTTQYYFDGCMVQNNKIYVGRMYVRDLTSDEINQLKTFDAKMTAYQKYLSSSIQQQVDSLFGDKSNLFNLFTDTRHETSSQPSDATTISTTTQAPVEPPETPHFCIAIY.

The N-terminal stretch at 1–17 (MKILFCFVLLAIAALRA) is a signal peptide. A disulfide bridge connects residues C135 and C230. A disordered region spans residues 200-222 (RHETSSQPSDATTISTTTQAPVE). The segment covering 204 to 219 (SSQPSDATTISTTTQA) has biased composition (polar residues).

The protein belongs to the protease inhibitor I33 family.

The protein localises to the secreted. Aspartyl protease inhibitor. This is Pepsin inhibitor Dit33 (DIT33) from Dirofilaria immitis (Canine heartworm).